A 235-amino-acid polypeptide reads, in one-letter code: MSVHIEAKQGEIAESILLPGDPLRAKYIAETFLEDVTCYNNVRGMLGFTGTYKGKRVSVQGTGMGVPSISIYVNELIQSYGVKNLIRVGTCGAIQKDVKVRDVIIAMTACTDSNINRLTFPGFDFAPAANFDLLKKAYDAGTEKGLHIRVGNVLTADVFYRESMDMVKKLGDYGVLAVEMETTALYTLAAKYGVNALSVLTVSDHIFTGEETTAEERQTTFNEMIEIALEAAIQQ.

Histidine 4 is a binding site for a purine D-ribonucleoside. Residues glycine 20, arginine 24, arginine 43, and 87–90 (RVGT) each bind phosphate. A purine D-ribonucleoside is bound by residues glutamate 162, 179-181 (EME), and 203-204 (SD). Aspartate 204 acts as the Proton donor in catalysis.

This sequence belongs to the PNP/UDP phosphorylase family. Homohexamer; trimer of homodimers.

The catalysed reaction is a purine D-ribonucleoside + phosphate = a purine nucleobase + alpha-D-ribose 1-phosphate. It catalyses the reaction a purine 2'-deoxy-D-ribonucleoside + phosphate = a purine nucleobase + 2-deoxy-alpha-D-ribose 1-phosphate. In terms of biological role, catalyzes the reversible phosphorolytic breakdown of the N-glycosidic bond in the beta-(deoxy)ribonucleoside molecules, with the formation of the corresponding free purine bases and pentose-1-phosphate. This is Purine nucleoside phosphorylase DeoD-type from Bacillus cytotoxicus (strain DSM 22905 / CIP 110041 / 391-98 / NVH 391-98).